Here is a 438-residue protein sequence, read N- to C-terminus: Zinc finger protein 641 (438 aa).

The disordered stretch occupies residues 1 to 53 (MQAEDRSQFGSAAEMLSEQTAALGTGWESMNVQLDGAEPQVERGSQEERPWRT). Residues 17–32 (SEQTAALGTGWESMNV) show a composition bias toward polar residues. Residues 40-51 (QVERGSQEERPW) show a composition bias toward basic and acidic residues. A KRAB domain is found at 109 to 181 (VTIKDVSLCF…DPQDLEERDI (73 aa)). Residues 171 to 265 (PDPQDLEERD…EMDSLLRPHT (95 aa)) are transactivation. Residue Ser-191 is modified to Phosphoserine. 3 C2H2-type zinc fingers span residues 264–286 (HTCP…QQTH), 292–314 (YSCL…QKTH), and 320–342 (SRCS…QRVH). The segment at 345-367 (GKSCKGQEVGESPGTRKRQRAPP) is disordered. C2H2-type zinc fingers lie at residues 372 to 394 (HVCT…WLTH) and 400 to 422 (FQCP…LLTH). The tract at residues 418 to 438 (HLLTHQGQSPRNSWDRGTSVF) is disordered. Positions 422-438 (HQGQSPRNSWDRGTSVF) are enriched in polar residues. The residue at position 426 (Ser-426) is a Phosphoserine.

This sequence belongs to the krueppel C2H2-type zinc-finger protein family. As to expression, highly expressed in skeletal muscle, moderate expression in heart, liver, and pancreas, lower expression in placenta, no expression seen in brain, lung, and kidney.

It is found in the nucleus. In terms of biological role, transcriptional activator. Activates transcriptional activities of SRE and AP-1. This chain is Zinc finger protein 641 (ZNF641), found in Homo sapiens (Human).